We begin with the raw amino-acid sequence, 188 residues long: Ion-translocating oxidoreductase complex subunit G (188 aa).

Over 1–9 (MSDSKEITK) the chain is Cytoplasmic. A helical transmembrane segment spans residues 10–30 (VIVTMVVISAVAAALLALTYT). Residues 31 to 188 (PTQAQLKLLQ…AVDYVSAQEG (158 aa)) are Extracellular-facing. Thr166 is modified (FMN phosphoryl threonine).

It belongs to the RnfG family. The Rnf complex is probably composed of eight subunits, including RnfA, RnfB, RnfC, RnfD, RnfE and RnfG. It depends on FMN as a cofactor.

Its subcellular location is the cell membrane. In terms of biological role, part of a membrane-bound complex that couples electron transfer with translocation of ions across the membrane. Catalyzes Na(+) transport, most probably coupled to electron transfer from reduced ferredoxin to methanophenazine and heterodisulfide reductase. Involved in heterodisulfide reduction during methanogenesis from acetate. In Methanosarcina acetivorans (strain ATCC 35395 / DSM 2834 / JCM 12185 / C2A), this protein is Ion-translocating oxidoreductase complex subunit G.